We begin with the raw amino-acid sequence, 570 residues long: RNA polymerase I termination factor (570 aa).

Residues 1-16 (MDSVSNLKSTNFQNNN) are compositionally biased toward polar residues. Disordered regions lie at residues 1–21 (MDSV…PKES), 37–68 (HIKK…DMDW), and 100–138 (SSMR…AKIK). The segment covering 37–56 (HIKKTKKKLKKQKKRKHGSK) has biased composition (basic residues). At T64 the chain carries Phosphothreonine. Over residues 108–137 (RSCHKKSSNSRSERKKHRKRKSSKERKAKI) the composition is skewed to basic residues. In terms of domain architecture, Myb-like 1 spans 273-339 (KFTPSEENAL…SIYKHIRRKY (67 aa)). In terms of domain architecture, HTH myb-type spans 340–391 (HIFEQRGKWTPEEDQELARLCLEKEGHWTEVGKLLGRMPEDCRDRWRNYMKC). Positions 367 to 389 (WTEVGKLLGRMPEDCRDRWRNYM) form a DNA-binding region, H-T-H motif. 2 consecutive Myb-like domains span residues 392–486 (GSKR…NKLV) and 493–549 (SMLS…MREK).

As to quaternary structure, interacts with FOB1. Interacts with the RENT complex subunits NET1 and SIR2.

The protein resides in the nucleus. It is found in the nucleolus. DNA-binding protein that recognizes sequence-specific replication termini (Ter sites) within rDNA. Binds to rDNA terminator elements and mediates efficient RNA polymerase I transcription termination. Required for rDNA silencing at the non-transcribed spacer 1 (NTS1). Promotes the association of SIR2 with NTS1 and contributes to maintenance of rDNA stability. The protein is RNA polymerase I termination factor of Saccharomyces cerevisiae (strain ATCC 204508 / S288c) (Baker's yeast).